We begin with the raw amino-acid sequence, 240 residues long: Methylthioribulose-1-phosphate dehydratase (240 aa).

Position 100 (Cys100) interacts with substrate. Residues His117 and His119 each coordinate Zn(2+). The Proton donor/acceptor role is filled by Glu146. His202 provides a ligand contact to Zn(2+).

The protein belongs to the aldolase class II family. MtnB subfamily. It depends on Zn(2+) as a cofactor.

It is found in the cytoplasm. The catalysed reaction is 5-(methylsulfanyl)-D-ribulose 1-phosphate = 5-methylsulfanyl-2,3-dioxopentyl phosphate + H2O. Its pathway is amino-acid biosynthesis; L-methionine biosynthesis via salvage pathway; L-methionine from S-methyl-5-thio-alpha-D-ribose 1-phosphate: step 2/6. In terms of biological role, catalyzes the dehydration of methylthioribulose-1-phosphate (MTRu-1-P) into 2,3-diketo-5-methylthiopentyl-1-phosphate (DK-MTP-1-P). This chain is Methylthioribulose-1-phosphate dehydratase, found in Emericella nidulans (strain FGSC A4 / ATCC 38163 / CBS 112.46 / NRRL 194 / M139) (Aspergillus nidulans).